Reading from the N-terminus, the 833-residue chain is DNA ligase (833 aa).

NAD(+) contacts are provided by residues 35-39 (DVEYD), 84-85 (SL), and E115. The active-site N6-AMP-lysine intermediate is K117. R138, E175, K292, and K316 together coordinate NAD(+). Zn(2+)-binding residues include C410, C413, C428, and C434. In terms of domain architecture, BRCT spans 750 to 833 (VQAGPLDGQT…AFLSEHGQAV (84 aa)).

It belongs to the NAD-dependent DNA ligase family. LigA subfamily. Mg(2+) serves as cofactor. Mn(2+) is required as a cofactor.

The catalysed reaction is NAD(+) + (deoxyribonucleotide)n-3'-hydroxyl + 5'-phospho-(deoxyribonucleotide)m = (deoxyribonucleotide)n+m + AMP + beta-nicotinamide D-nucleotide.. Its function is as follows. DNA ligase that catalyzes the formation of phosphodiester linkages between 5'-phosphoryl and 3'-hydroxyl groups in double-stranded DNA using NAD as a coenzyme and as the energy source for the reaction. It is essential for DNA replication and repair of damaged DNA. The chain is DNA ligase from Xanthomonas campestris pv. campestris (strain 8004).